Here is a 281-residue protein sequence, read N- to C-terminus: Arabinooligosaccharides transport system permease protein AraQ (281 aa).

6 consecutive transmembrane segments (helical) span residues 15–35, 81–101, 112–132, 142–162, 185–205, and 247–267; these read LTLF…CLLL, LVLG…IGYG, IIFV…MLPL, IDSY…VFFF, FGIF…AMII, and MLIS…LFFQ. One can recognise an ABC transmembrane type-1 domain in the interval 77-266; that stretch reads FFNSLVLGLF…LPVIIIFLFF (190 aa).

It belongs to the binding-protein-dependent transport system permease family. MalFG subfamily. The complex is composed of two ATP-binding proteins (MsmX), two transmembrane proteins (AraP and AraQ) and a solute-binding protein (AraN).

The protein localises to the cell membrane. Functionally, part of the ABC transporter complex AraNPQ involved in the uptake of arabinooligosaccharides. Transports alpha-1,5-arabinooligosaccharides, at least up to four L-arabinosyl units. Responsible for the translocation of the substrate across the membrane. This is Arabinooligosaccharides transport system permease protein AraQ from Bacillus subtilis (strain 168).